We begin with the raw amino-acid sequence, 403 residues long: CCA-adding enzyme (403 aa).

ATP contacts are provided by Gly32 and Arg35. CTP contacts are provided by Gly32 and Arg35. Mg(2+) is bound by residues Asp45 and Asp47. 5 residues coordinate ATP: Arg116, Asp159, Arg162, Arg165, and Arg168. Residues Arg116, Asp159, Arg162, Arg165, and Arg168 each contribute to the CTP site.

It belongs to the tRNA nucleotidyltransferase/poly(A) polymerase family. Bacterial CCA-adding enzyme type 3 subfamily. Homodimer. Requires Mg(2+) as cofactor.

The enzyme catalyses a tRNA precursor + 2 CTP + ATP = a tRNA with a 3' CCA end + 3 diphosphate. The catalysed reaction is a tRNA with a 3' CCA end + 2 CTP + ATP = a tRNA with a 3' CCACCA end + 3 diphosphate. Catalyzes the addition and repair of the essential 3'-terminal CCA sequence in tRNAs without using a nucleic acid template. Adds these three nucleotides in the order of C, C, and A to the tRNA nucleotide-73, using CTP and ATP as substrates and producing inorganic pyrophosphate. tRNA 3'-terminal CCA addition is required both for tRNA processing and repair. Also involved in tRNA surveillance by mediating tandem CCA addition to generate a CCACCA at the 3' terminus of unstable tRNAs. While stable tRNAs receive only 3'-terminal CCA, unstable tRNAs are marked with CCACCA and rapidly degraded. The chain is CCA-adding enzyme from Streptococcus uberis (strain ATCC BAA-854 / 0140J).